The following is a 393-amino-acid chain: MSDSNKKTCNDAKQPILVLDLVRLVLERLSFVDFHRARCVSSVWYSASKSCIGGTNPTAPWIILFPNEHVKTNNDSCKSIDPRDHSSYTIRDLGFDMVRSRCLASSGSWFLMLDHKTDFHLLNLFTRERIPLPSLESIDGLQMKFVRTGDCGFEMSMYYKAHGLISYGKNSDLRISDAVLWVDEKNGDYFVVWFHHSTFAYHKKGGDNNSWKVFQPSKHQGCINMVFKEGKLYVLNPARNISVFDFSGGHSPVEYATPPSPNDDYYVRNLAVTLSGEVLIISSNPKKCFVKLYKIDPKSSEWRLIKSIGDEALILDLGITVAAKDGVMRNCIYFSHHELLRYKGVSLCNDDKYGICIYHIKTKKKVQEFEHLTTSSPILFKDARWFFPTFGGN.

The region spanning 12–59 (AKQPILVLDLVRLVLERLSFVDFHRARCVSSVWYSASKSCIGGTNPTA) is the F-box domain.

The protein resides in the cytoplasm. It localises to the nucleus. It is found in the nucleolus. Component of SCF(ASK-cullin-F-box) E3 ubiquitin ligase complexes, which may mediate the ubiquitination and subsequent proteasomal degradation of target proteins. Required for brassinosteroid (BR) signal transduction. Mediates ASK7/BIN2/SK21 inactivation both by competing with substrate binding (e.g. BZR1) and by promoting its ubiquitination and subsequent proteasomal degradation. This is F-box protein KIB4 from Arabidopsis thaliana (Mouse-ear cress).